The chain runs to 59 residues: Conorfamide-Ep1 (59 aa).

The N-terminal stretch at 1–19 is a signal peptide; sequence MSGCGFLLLALLLLVTVEA. A propeptide spanning residues 20–25 is cleaved from the precursor; that stretch reads TKMEKK. I43 carries the post-translational modification Isoleucine amide. Residues 45 to 59 constitute a propeptide that is removed on maturation; that stretch reads RRDMQSPLLSERLRF.

This sequence belongs to the FARP (FMRFamide related peptide) family. As to expression, expressed by the venom duct.

Its subcellular location is the secreted. Functionally, neurotoxin that is active on vertebrates. When tested at high doses (10 uM), the toxin affects all zebrafish and mouse DRG neurons in culture, which could be an indication of an effect on a widely expressed receptor or ion channel found in both species. At low doses (1 uM), the effects of the toxin are confined to a specific subpopulation of zebrafish and mouse DRG neurons. In vivo, it induces long-lasting dramatic alterations in the locomotor behavior of zebrafish larvae. It rapidly induces hypoactivity and death of larvae at high doses and it causes hyperactivity at lower doses. In zebrafish adults, intramuscular injection causes the decrease of the movements and visited spaces. In mice, intracranial injection causes lethargy and prolonges sleeping phases and reduced movement. The protein is Conorfamide-Ep1 of Conus episcopatus (Bishop's cone).